The chain runs to 533 residues: MSTENTSLVVELLEYVKLGLSYFQALPLAQRVSIMVALPFVYTITWQLLYSLRKDRPPLVFYWIPWVGSAIPYGTKPYEFFEDCQKKYGDIFSFMLLGRIMTVYLGPKGHEFIFNAKLADVSAEAAYSHLTTPVFGKGVIYDCPNHRLMEQKKFVKGALTKEAFVRYVPLIAEEIYKYFRNSKNFKINENNSGIVDVMVSQPEMTIFTASRSLLGKEMRDKLDTDFAYLYSDLDKGFTPINFVFPNLPLEHYRKRDHAQQAISGTYMSLIKERREKNDIQNRDLIDELMKNSTYKDGTKMTDQEIANLLIGVLMGGQHTSAATSAWCLLHLAERPDVQEELYQEQMRVLNNDTKELTYDDLQNMPLLNQMIKETLRLHHPLHSLFRKVMRDVAIPNTSYVVPRDYHVLVSPGYTHLQEEFFPKPNEFNIHRWDGDAASSSAAGGDEVDYGFGAISKGVSSPYLPFGGGRHRCIGELFAYCQLGVLMSIFIRTMKWRYPTEGETVPPSDFTSMVTLPTAPAKIYWEKRHPEQKY.

Position 472 (C472) interacts with heme.

It belongs to the cytochrome P450 family. Heme is required as a cofactor.

The protein localises to the membrane. It carries out the reaction a 14alpha-methyl steroid + 3 reduced [NADPH--hemoprotein reductase] + 3 O2 = a Delta(14) steroid + formate + 3 oxidized [NADPH--hemoprotein reductase] + 4 H2O + 4 H(+). The enzyme catalyses a 14alpha-methyl steroid + reduced [NADPH--hemoprotein reductase] + O2 = a 14alpha-hydroxymethyl steroid + oxidized [NADPH--hemoprotein reductase] + H2O + H(+). The catalysed reaction is a 14alpha-hydroxymethyl steroid + reduced [NADPH--hemoprotein reductase] + O2 = a 14alpha-formyl steroid + oxidized [NADPH--hemoprotein reductase] + 2 H2O + H(+). It catalyses the reaction a 14alpha-formyl steroid + reduced [NADPH--hemoprotein reductase] + O2 = a Delta(14) steroid + formate + oxidized [NADPH--hemoprotein reductase] + H2O + 2 H(+). It carries out the reaction lanosterol + 3 reduced [NADPH--hemoprotein reductase] + 3 O2 = 4,4-dimethyl-5alpha-cholesta-8,14,24-trien-3beta-ol + formate + 3 oxidized [NADPH--hemoprotein reductase] + 4 H2O + 4 H(+). The enzyme catalyses lanosterol + reduced [NADPH--hemoprotein reductase] + O2 = 32-hydroxylanosterol + oxidized [NADPH--hemoprotein reductase] + H2O + H(+). The catalysed reaction is 32-hydroxylanosterol + reduced [NADPH--hemoprotein reductase] + O2 = 32-oxolanosterol + oxidized [NADPH--hemoprotein reductase] + 2 H2O + H(+). It catalyses the reaction 32-oxolanosterol + reduced [NADPH--hemoprotein reductase] + O2 = 4,4-dimethyl-5alpha-cholesta-8,14,24-trien-3beta-ol + formate + oxidized [NADPH--hemoprotein reductase] + H2O + 2 H(+). It carries out the reaction eburicol + 3 reduced [NADPH--hemoprotein reductase] + 3 O2 = 14-demethyleburicol + formate + 3 oxidized [NADPH--hemoprotein reductase] + 4 H2O + 4 H(+). The enzyme catalyses eburicol + reduced [NADPH--hemoprotein reductase] + O2 = 32-hydroxyeburicol + oxidized [NADPH--hemoprotein reductase] + H2O + H(+). The catalysed reaction is 32-hydroxyeburicol + reduced [NADPH--hemoprotein reductase] + O2 = 32-oxoeburicol + oxidized [NADPH--hemoprotein reductase] + 2 H2O + H(+). It catalyses the reaction 32-oxoeburicol + reduced [NADPH--hemoprotein reductase] + O2 = 14-demethyleburicol + formate + oxidized [NADPH--hemoprotein reductase] + H2O + 2 H(+). The protein operates within steroid biosynthesis; zymosterol biosynthesis; zymosterol from lanosterol: step 1/6. Sterol 14alpha-demethylase that plays a critical role in the third module of ergosterol biosynthesis pathway, being ergosterol the major sterol component in fungal membranes that participates in a variety of functions. The third module or late pathway involves the ergosterol synthesis itself through consecutive reactions that mainly occur in the endoplasmic reticulum (ER) membrane. In filamentous fungi, during the initial step of this module, lanosterol (lanosta-8,24-dien-3beta-ol) can be metabolized to eburicol. Sterol 14alpha-demethylase catalyzes the three-step oxidative removal of the 14alpha-methyl group (C-32) of both these sterols in the form of formate, and converts eburicol and lanosterol to 14-demethyleburicol (4,4,24-trimethylergosta-8,14,24(28)-trienol) and 4,4-dimethyl-5alpha-cholesta-8,14,24-trien-3beta-ol, respectively, which are further metabolized by other enzymes in the pathway to ergosterol. Can also use substrates not intrinsic to fungi, such as 24,25-dihydrolanosterol (DHL), producing 4,4-dimethyl-8,14-cholestadien-3-beta-ol, but at lower rates than the endogenous substrates. The polypeptide is Lanosterol 14-alpha demethylase (ERG11) (Candida glabrata (strain ATCC 2001 / BCRC 20586 / JCM 3761 / NBRC 0622 / NRRL Y-65 / CBS 138) (Yeast)).